Consider the following 90-residue polypeptide: Small ribosomal subunit protein bS20 (90 aa).

The disordered stretch occupies residues 1-29 (MANTASAEKRNRQAQKRRARNVQVRTGVK).

Belongs to the bacterial ribosomal protein bS20 family.

Functionally, binds directly to 16S ribosomal RNA. This is Small ribosomal subunit protein bS20 from Anaeromyxobacter sp. (strain Fw109-5).